A 196-amino-acid polypeptide reads, in one-letter code: MTLQCTKSAGPWKMVVWDEDGFQGRRHEFTAECPSVLELGFETVRSLKVLSGAWVGFEHAGFQGQQYILERGEYPSWDAWGGNTAYPAERLTSFRPAACANHRDSRLTIFEQENFLGKKGELSDDYPSLQAMGWEGNEVGSFHVHSGAWVCSQFPGYRGFQYVLECDHHSGDYKHFREWGSHAPTFQVQSIRRIQQ.

At T2 the chain carries N-acetylthreonine. The tract at residues 2–11 (TLQCTKSAGP) is N-terminal arm. Beta/gamma crystallin 'Greek key' domains follow at residues 12 to 51 (WKMV…KVLS) and 52 to 98 (GAWV…RPAA). Residues 99-104 (CANHRD) are connecting peptide. Beta/gamma crystallin 'Greek key' domains are found at residues 105 to 146 (SRLT…HVHS) and 147 to 195 (GAWV…RRIQ).

The protein belongs to the beta/gamma-crystallin family. In terms of assembly, homo/heterodimer, or complexes of higher-order. The structure of beta-crystallin oligomers seems to be stabilized through interactions between the N-terminal arms.

Crystallins are the dominant structural components of the vertebrate eye lens. This is Beta-crystallin A4 (CRYBA4) from Homo sapiens (Human).